Here is a 327-residue protein sequence, read N- to C-terminus: DNA primase large subunit PriL (327 aa).

Positions 218, 290, 299, and 307 each coordinate [4Fe-4S] cluster.

Belongs to the eukaryotic-type primase large subunit family. In terms of assembly, heterodimer of a small subunit (PriS) and a large subunit (PriL). Requires [4Fe-4S] cluster as cofactor.

Functionally, regulatory subunit of DNA primase, an RNA polymerase that catalyzes the synthesis of short RNA molecules used as primers for DNA polymerase during DNA replication. Stabilizes and modulates the activity of the small subunit, increasing the rate of DNA synthesis, and conferring RNA synthesis capability. The DNA polymerase activity may enable DNA primase to also catalyze primer extension after primer synthesis. May also play a role in DNA repair. The chain is DNA primase large subunit PriL from Thermoplasma volcanium (strain ATCC 51530 / DSM 4299 / JCM 9571 / NBRC 15438 / GSS1).